Here is a 443-residue protein sequence, read N- to C-terminus: Monooxygenase asqM (443 aa).

It belongs to the aromatic-ring hydroxylase family. Requires FAD as cofactor.

It functions in the pathway secondary metabolite biosynthesis. It participates in alkaloid biosynthesis. Its pathway is mycotoxin biosynthesis. Monooxygenase; part of the gene cluster that mediates the biosynthesis of the aspoquinolone mycotoxins. The role of asqM within the aspoquinolone pathway has still to be determined. The first step of the pathway is catalyzed by the nonribosomal peptide synthetase asqK that condenses anthranilic acid and O-methyl-L-tyrosine to produce 4'-methoxycyclopeptin. 4'-methoxycyclopeptin is then converted to 4'-methoxydehydrocyclopeptin by the ketoglutarate-dependent dioxygenase asqJ. AsqJ also converts its first product 4'-methoxydehydrocyclopeptin to 4'-methoxycyclopenin. The following conversion of 4'-methoxycyclopenin into 4'-methoxyviridicatin is catalyzed by the cyclopenase asqI. 4'-methoxyviridicatin is the precursor of quinolone natural products, and is further converted to quinolinone B. The prenyltransferase asqH1 then catalyzes the canonical Friedel-Crafts alkylation of quinolinone B with dimethylallyl cation to yield dimethylallyl quinolone, which is subjected to FAD-dependent dehydrogenation by the FAD-linked oxidoreductase asqF to yield conjugated aryl diene. The delta(3') double bond then serves as the site of the second alkylation with DMAPP catalyzed by the prenyltransferase asqH2 to yield a carbenium ion intermediate, which can be attacked by H(2)O to yield a styrenyl quinolone containing a C3'-hydroxyprenyl chain. The FAD-dependent monooxygenase asqG performs epoxidation of the terminal C7'-C8' olefin. Finally, after dehydratation of the epoxide at C3 by asqC, the quinolone epoxide rearrangement protein asqO catalyzes an enzymatic 3-exo-tet cyclization to yield the cyclopropyl-THF ring system in aspoquinolone. The polypeptide is Monooxygenase asqM (Emericella nidulans (strain FGSC A4 / ATCC 38163 / CBS 112.46 / NRRL 194 / M139) (Aspergillus nidulans)).